Reading from the N-terminus, the 350-residue chain is Ion-translocating oxidoreductase complex subunit D (350 aa).

5 helical membrane-spanning segments follow: residues 20 to 40, 44 to 64, 68 to 88, 89 to 109, and 125 to 145; these read VMVL…YFFG, LIQI…ILKI, PVLN…LAIS, IPPL…IIFV, and MAGY…WLPV. Threonine 187 carries the FMN phosphoryl threonine modification. The next 5 membrane-spanning stretches (helical) occupy residues 215-235, 241-261, 267-287, 300-320, and 322-342; these read SWQQ…ILLF, WHIP…AFAY, APPL…FILS, ILYA…GGYP, and AVAF…YYTQ.

Belongs to the NqrB/RnfD family. In terms of assembly, the complex is composed of six subunits: RnfA, RnfB, RnfC, RnfD, RnfE and RnfG. It depends on FMN as a cofactor.

The protein resides in the cell inner membrane. Its function is as follows. Part of a membrane-bound complex that couples electron transfer with translocation of ions across the membrane. This chain is Ion-translocating oxidoreductase complex subunit D, found in Psychromonas ingrahamii (strain DSM 17664 / CCUG 51855 / 37).